The chain runs to 287 residues: ATP synthase gamma chain (287 aa).

It belongs to the ATPase gamma chain family. F-type ATPases have 2 components, CF(1) - the catalytic core - and CF(0) - the membrane proton channel. CF(1) has five subunits: alpha(3), beta(3), gamma(1), delta(1), epsilon(1). CF(0) has three main subunits: a, b and c.

It localises to the cell inner membrane. In terms of biological role, produces ATP from ADP in the presence of a proton gradient across the membrane. The gamma chain is believed to be important in regulating ATPase activity and the flow of protons through the CF(0) complex. The sequence is that of ATP synthase gamma chain from Xylella fastidiosa (strain 9a5c).